We begin with the raw amino-acid sequence, 383 residues long: Deoxyhypusine synthase-like protein (383 aa).

Belongs to the deoxyhypusine synthase family.

The polypeptide is Deoxyhypusine synthase-like protein (Nostoc sp. (strain PCC 7120 / SAG 25.82 / UTEX 2576)).